Here is a 185-residue protein sequence, read N- to C-terminus: TRAF-interacting protein with FHA domain-containing protein A (185 aa).

Threonine 9 carries the phosphothreonine modification. The FHA domain occupies 48–104 (VKFGRNSNMCQYTFQDKQVSRVQFALQPFKQFNSSVLSFEIKNMSKKTSLMVDNQEL).

It belongs to the TIFA family. Homooligomer; homooligomerizes following phosphorylation at Thr-9. Interacts with IRAK1, TRAF2 and TRAF6. Interacts with TIFAB; binding to TIFAB inhibits TRAF6 activation, possibly by inducing a conformational change in TIFA. Interacts with ZCCHC11; binding to ZCCHC11 suppresses the TRAF6-dependent activation of NF-kappa-B. Phosphorylated at Thr-9 following detection of ADP-D-glycero-beta-D-manno-heptose (ADP-Heptose) by ALPK1. Phosphorylation at Thr-9 by ALPK1 leads to the formation of an intermolecular binding between the FHA domain and phosphorylated Thr-9, promoting TIFA oligomerization and TIFA-mediated NF-kappa-B activation.

Its subcellular location is the cytoplasm. Adapter molecule that plays a key role in the activation of pro-inflammatory NF-kappa-B signaling following detection of bacterial pathogen-associated molecular pattern metabolites (PAMPs). Promotes activation of an innate immune response by inducing the oligomerization and polyubiquitination of TRAF6, which leads to the activation of TAK1 and IKK through a proteasome-independent mechanism. TIFA-dependent innate immune response is triggered by ADP-D-glycero-beta-D-manno-heptose (ADP-Heptose), a potent PAMP present in all Gram-negative and some Gram-positive bacteria: ADP-Heptose is recognized by ALPK1, which phosphorylates TIFA at Thr-9, leading to TIFA homooligomerization and subsequent activation of pro-inflammatory NF-kappa-B signaling. In Rattus norvegicus (Rat), this protein is TRAF-interacting protein with FHA domain-containing protein A.